A 152-amino-acid chain; its full sequence is Probable spermine N(1)-acetyltransferase (152 aa).

The N-acetyltransferase domain occupies Ile3–Leu152. Residues Phe82–Ile84, Gln89–Lys95, and Asn122–Arg131 contribute to the acetyl-CoA site. The active-site Proton donor is Tyr129.

Belongs to the acetyltransferase family.

It carries out the reaction an alkane-alpha,omega-diamine + acetyl-CoA = an N-acetylalkane-alpha,omega-diamine + CoA + H(+). The catalysed reaction is spermine + acetyl-CoA = N(1)-acetylspermine + CoA + H(+). The protein operates within amine and polyamine degradation; spermine degradation. Its function is as follows. Probably acetylates spermine to N(1)-acetylspermine. This chain is Probable spermine N(1)-acetyltransferase, found in Bacillus subtilis subsp. natto (strain BEST195).